A 71-amino-acid chain; its full sequence is High-potential iron-sulfur protein isozyme 2 (71 aa).

The [4Fe-4S] cluster site is built by cysteine 34, cysteine 37, cysteine 51, and cysteine 65.

The protein belongs to the high-potential iron-sulfur protein (HiPIP) family. Homodimer.

Its function is as follows. Specific class of high-redox-potential 4Fe-4S ferredoxins. Functions in anaerobic electron transport in most purple and in some other photosynthetic bacteria and in at least one genus (Paracoccus) of halophilic, denitrifying bacteria. The sequence is that of High-potential iron-sulfur protein isozyme 2 (hip2) from Ectothiorhodospira shaposhnikovii (Ectothiorhodospira vacuolata).